Here is a 454-residue protein sequence, read N- to C-terminus: Sensor histidine kinase YkoH (454 aa).

Topologically, residues 1-12 (MKLKTKIHLYTS) are cytoplasmic. Residues 13 to 33 (ISLLILLILVHTAVYLIFSSA) traverse the membrane as a helical segment. Residues 34–153 (LTSKDAARLA…NTEESLFLLK (120 aa)) lie on the Extracellular side of the membrane. The helical transmembrane segment at 154 to 174 (IILIAASAAVCIASFFAGSLL) threads the bilayer. Topologically, residues 175 to 454 (ARRIINPIRR…QFSEQNGGGR (280 aa)) are cytoplasmic. The HAMP domain maps to 176-230 (RRIINPIRRLMITMKDIQRDKEFKTISLEGQSNDELYQMGLTFNEMAMMLKEHYD). One can recognise a Histidine kinase domain in the interval 238 to 450 (DASHELKTPL…AVTMQFSEQN (213 aa)). Residue H241 is modified to Phosphohistidine; by autocatalysis.

Its subcellular location is the cell membrane. The enzyme catalyses ATP + protein L-histidine = ADP + protein N-phospho-L-histidine.. Functionally, probable member of the two-component regulatory system YkoH/YkoG. Potentially phosphorylates YkoG. The sequence is that of Sensor histidine kinase YkoH (ykoH) from Bacillus subtilis (strain 168).